We begin with the raw amino-acid sequence, 87 residues long: Large ribosomal subunit protein eL31 (87 aa).

It belongs to the eukaryotic ribosomal protein eL31 family.

The sequence is that of Large ribosomal subunit protein eL31 (rpl31e) from Methanocaldococcus jannaschii (strain ATCC 43067 / DSM 2661 / JAL-1 / JCM 10045 / NBRC 100440) (Methanococcus jannaschii).